A 283-amino-acid chain; its full sequence is Endochitinase At2g43620 (283 aa).

The N-terminal stretch at 1-28 (MATLRAMLKNAFILFLFTLTIMAKTVFS) is a signal peptide. Residues 29–66 (QQCGTTGCAANLCCSRYGYCGTTDAYCGTGCRSGPCSS) form the Chitin-binding type-1 domain. Disulfide bonds link C31-C42, C36-C48, C41-C55, and C59-C64. The interval 88–283 (DTIENVVTPA…GITPGANLSC (196 aa)) is catalytic. E150 acts as the Proton donor in catalysis. An N-linked (GlcNAc...) asparagine glycan is attached at N280.

The protein belongs to the glycosyl hydrolase 19 family. Chitinase class I subfamily.

The enzyme catalyses Random endo-hydrolysis of N-acetyl-beta-D-glucosaminide (1-&gt;4)-beta-linkages in chitin and chitodextrins.. This Arabidopsis thaliana (Mouse-ear cress) protein is Endochitinase At2g43620.